We begin with the raw amino-acid sequence, 231 residues long: Large ribosomal subunit protein uL1 (231 aa).

This sequence belongs to the universal ribosomal protein uL1 family. In terms of assembly, part of the 50S ribosomal subunit.

Functionally, binds directly to 23S rRNA. The L1 stalk is quite mobile in the ribosome, and is involved in E site tRNA release. Its function is as follows. Protein L1 is also a translational repressor protein, it controls the translation of the L11 operon by binding to its mRNA. In Lactobacillus delbrueckii subsp. bulgaricus (strain ATCC 11842 / DSM 20081 / BCRC 10696 / JCM 1002 / NBRC 13953 / NCIMB 11778 / NCTC 12712 / WDCM 00102 / Lb 14), this protein is Large ribosomal subunit protein uL1.